Consider the following 447-residue polypeptide: MSQSKADYINVIGAGLAGSEAAYQIAKRGIPVKLYEMRGVKATPQHKTTNFAELVCSNSFRGDSLTNAVGLLKEEMRRLDSIIMRNGEAHRVPAGGAMAVDREGYAEAVTAEIESHPLIEVIRKEITEIPDDAITVIASGPLTSDALAEKIHELNGGDGFYFYDAAAPIVDKATIDMNKVYLKSRYDKGEAAYLNCPMTKEEFMAFYEALTTAEEAPLNSFEKEKYFEGCMPIEVMAKRGIKTMLYGPMKPVGLEYPEDYMGPRDGDFKTPYAVVQLRQDNAAGSLYNIVGFQTHLKWGEQKRVFQMIPGLENAEFVRYGVMHRNSYMDSPNLLKQTFQSKSNPNLFFAGQMTGVEGYVESAASGLVAGINAARLFKGEDEVIFPHTTAIGSLPYYVTHAESKHFQPMNVNFGIIKELEGPRIRDKKERYEKIAERSLKDLQTFIDA.

13–18 (GAGLAG) lines the FAD pocket.

This sequence belongs to the MnmG family. TrmFO subfamily. FAD serves as cofactor.

The protein resides in the cytoplasm. The enzyme catalyses uridine(54) in tRNA + (6R)-5,10-methylene-5,6,7,8-tetrahydrofolate + NADH + H(+) = 5-methyluridine(54) in tRNA + (6S)-5,6,7,8-tetrahydrofolate + NAD(+). It catalyses the reaction uridine(54) in tRNA + (6R)-5,10-methylene-5,6,7,8-tetrahydrofolate + NADPH + H(+) = 5-methyluridine(54) in tRNA + (6S)-5,6,7,8-tetrahydrofolate + NADP(+). Catalyzes the folate-dependent formation of 5-methyl-uridine at position 54 (M-5-U54) in all tRNAs. This is Methylenetetrahydrofolate--tRNA-(uracil-5-)-methyltransferase TrmFO from Streptococcus thermophilus (strain ATCC BAA-250 / LMG 18311).